Consider the following 155-residue polypeptide: Ribonuclease H (155 aa).

Residues 5–146 (LAEVVEIFTD…ADMLANRGVQ (142 aa)) form the RNase H type-1 domain. Mg(2+) contacts are provided by D14, E52, D74, and D138.

This sequence belongs to the RNase H family. As to quaternary structure, monomer. Mg(2+) is required as a cofactor.

The protein localises to the cytoplasm. It catalyses the reaction Endonucleolytic cleavage to 5'-phosphomonoester.. Functionally, endonuclease that specifically degrades the RNA of RNA-DNA hybrids. The polypeptide is Ribonuclease H (Nitrosospira multiformis (strain ATCC 25196 / NCIMB 11849 / C 71)).